A 52-amino-acid polypeptide reads, in one-letter code: Conotoxin Cal6.36 (52 aa).

Positions 1–22 are cleaved as a signal peptide; sequence MKVTCVLTLAVLILTVGQMVTA. Intrachain disulfides connect Cys24–Cys39, Cys31–Cys43, and Cys38–Cys47.

As to expression, expressed by the venom duct.

The protein resides in the secreted. Functionally, probable neurotoxin. The sequence is that of Conotoxin Cal6.36 from Californiconus californicus (California cone).